The following is a 125-amino-acid chain: Glutaredoxin-C1 (125 aa).

Residues Val19–Ala119 enclose the Glutaredoxin domain. Cys39 and Cys42 form a disulfide bridge.

It belongs to the glutaredoxin family. CPYC subfamily.

It localises to the cytoplasm. Its function is as follows. Has a glutathione-disulfide oxidoreductase activity in the presence of NADPH and glutathione reductase. Reduces low molecular weight disulfides and proteins. The polypeptide is Glutaredoxin-C1 (GRXC1) (Arabidopsis thaliana (Mouse-ear cress)).